We begin with the raw amino-acid sequence, 208 residues long: Putative adhesin P1-like protein MPN_468 (208 aa).

Disordered regions lie at residues 29–49 (TNGS…VAPT) and 97–172 (DSKT…NLTP). Residues 100–132 (TQNNTTTNENHTKFASATGSGQQQGSTTTTSAG) are compositionally biased toward low complexity. Residues 145 to 158 (SGNSISVQEATSGD) are compositionally biased toward polar residues. Low complexity predominate over residues 159–172 (NLTNYTNLPPNLTP).

Belongs to the adhesin P1 family.

This chain is Putative adhesin P1-like protein MPN_468, found in Mycoplasma pneumoniae (strain ATCC 29342 / M129 / Subtype 1) (Mycoplasmoides pneumoniae).